The chain runs to 243 residues: Orotidine 5'-phosphate decarboxylase (243 aa).

Substrate is bound by residues D16, K38, 65–74 (DLKLHDIPNT), T120, R181, Q190, G210, and R211. K67 serves as the catalytic Proton donor.

This sequence belongs to the OMP decarboxylase family. Type 1 subfamily. In terms of assembly, homodimer.

It catalyses the reaction orotidine 5'-phosphate + H(+) = UMP + CO2. It functions in the pathway pyrimidine metabolism; UMP biosynthesis via de novo pathway; UMP from orotate: step 2/2. Functionally, catalyzes the decarboxylation of orotidine 5'-monophosphate (OMP) to uridine 5'-monophosphate (UMP). This Bradyrhizobium sp. (strain BTAi1 / ATCC BAA-1182) protein is Orotidine 5'-phosphate decarboxylase.